A 193-amino-acid chain; its full sequence is Recombination protein RecR (193 aa).

The C4-type zinc-finger motif lies at 61–76 (CSSCNALSESEVCEIC). In terms of domain architecture, Toprim spans 84–170 (SQLCMVLHPR…TFTKIAQGVP (87 aa)).

Belongs to the RecR family.

Its function is as follows. May play a role in DNA repair. It seems to be involved in an RecBC-independent recombinational process of DNA repair. It may act with RecF and RecO. This is Recombination protein RecR from Helicobacter pylori (strain G27).